The primary structure comprises 296 residues: Acetyl-coenzyme A carboxylase carboxyl transferase subunit beta (296 aa).

The CoA carboxyltransferase N-terminal domain occupies 25 to 294 (VWTKCTACEQ…PFVEPELISE (270 aa)). Residues C29, C32, C48, and C51 each contribute to the Zn(2+) site. The C4-type zinc-finger motif lies at 29 to 51 (CTACEQVLYSEELKRNLYVCPKC).

Belongs to the AccD/PCCB family. In terms of assembly, acetyl-CoA carboxylase is a heterohexamer composed of biotin carboxyl carrier protein (AccB), biotin carboxylase (AccC) and two subunits each of ACCase subunit alpha (AccA) and ACCase subunit beta (AccD). Zn(2+) is required as a cofactor.

It is found in the cytoplasm. The catalysed reaction is N(6)-carboxybiotinyl-L-lysyl-[protein] + acetyl-CoA = N(6)-biotinyl-L-lysyl-[protein] + malonyl-CoA. Its pathway is lipid metabolism; malonyl-CoA biosynthesis; malonyl-CoA from acetyl-CoA: step 1/1. In terms of biological role, component of the acetyl coenzyme A carboxylase (ACC) complex. Biotin carboxylase (BC) catalyzes the carboxylation of biotin on its carrier protein (BCCP) and then the CO(2) group is transferred by the transcarboxylase to acetyl-CoA to form malonyl-CoA. In Haemophilus influenzae (strain 86-028NP), this protein is Acetyl-coenzyme A carboxylase carboxyl transferase subunit beta.